Reading from the N-terminus, the 193-residue chain is MAQGSNYKVPFRRRREGKTDYAARMKLVDYDKSRLVVRLSNAHATVQVIDYAPEGDITLASAVSKQLANYGYLGGASNTSAVYLTGYLCAKRALAKGVDSAILDIGLKSAIKGSKVFAALKGAVDAGLDIPYGEAVLPDESRINGEHVANYAESLDDDEIAKLFSKYLERGLQPADLPKNFEETKKNIDEAEE.

This sequence belongs to the universal ribosomal protein uL18 family. Part of the 50S ribosomal subunit. Contacts the 5S and 23S rRNAs.

This is one of the proteins that bind and probably mediate the attachment of the 5S RNA into the large ribosomal subunit, where it forms part of the central protuberance. The chain is Large ribosomal subunit protein uL18 from Methanobrevibacter smithii (strain ATCC 35061 / DSM 861 / OCM 144 / PS).